Here is a 497-residue protein sequence, read N- to C-terminus: MGLPALLASALCTFVLPLLLFLAAIKLWDLYCVSGRDRSCALPLPPGTMGFPFFGETLQMVLQRRKFLQMKRRKYGFIYKTHLFGRPTVRVMGADNVRRILLGEHRLVSVHWPASVRTILGSGCLSNLHDSSHKQRKKVIMRAFSREALECYVPVITEEVGSSLEQWLSCGERGLLVYPEVKRLMFRIAMRILLGCEPQLAGDGDSEQQLVEAFEEMTRNLFSLPIDVPFSGLYRGMKARNLIHARIEQNIRAKICGLRASEAGQGCKDALQLLIEHSWERGERLDMQALKQSSTELLFGGHETTASAATSLITYLGLYPHVLQKVREELKSKGLLCKSNQDNKLDMEILEQLKYIGCVIKETLRLNPPVPGGFRVALKTFELNGYQIPKGWNVIYSICDTHDVAEIFTNKEEFNPDRFMLPHPEDASRFSFIPFGGGLRSCVGKEFAKILLKIFTVELARHCDWQLLNGPPTMKTSPTVYPVDNLPARFTHFHGEI.

Residue Cys-442 participates in heme binding.

Belongs to the cytochrome P450 family. Heme serves as cofactor. Expressed in most fetal and adult tissues with highest levels in adult liver, heart, pituitary gland, adrenal gland, placenta and regions of the brain. Expressed at high levels in lung, pancreas, skin and uterus (at protein level). Lower expression level is detected in spleen, kidney, intestine and adipose tissue (at protein level).

Its subcellular location is the endoplasmic reticulum membrane. The protein localises to the microsome membrane. The catalysed reaction is all-trans-retinoate + reduced [NADPH--hemoprotein reductase] + O2 = all-trans-(4S)-hydroxyretinoate + oxidized [NADPH--hemoprotein reductase] + H2O + H(+). It carries out the reaction all-trans-(4S)-hydroxyretinoate + reduced [NADPH--hemoprotein reductase] + O2 = all-trans-(4S,16)-dihydroxyretinoate + oxidized [NADPH--hemoprotein reductase] + H2O + H(+). The enzyme catalyses all-trans-retinoate + reduced [NADPH--hemoprotein reductase] + O2 = all-trans-18-hydroxyretinoate + oxidized [NADPH--hemoprotein reductase] + H2O + H(+). In terms of biological role, a cytochrome P450 monooxygenase involved in the metabolism of retinoates (RAs), the active metabolites of vitamin A, and critical signaling molecules in animals. RAs exist as at least four different isomers: all-trans-RA (atRA), 9-cis-RA, 13-cis-RA, and 9,13-dicis-RA, where atRA is considered to be the biologically active isomer, although 9-cis-RA and 13-cis-RA also have activity. Catalyzes the hydroxylation of atRA primarily at C-4 and C-18, thereby contributing to the regulation of atRA homeostasis and signaling. Hydroxylation of atRA limits its biological activity and initiates a degradative process leading to its eventual elimination. Involved in the convertion of atRA to all-trans-4-oxo-RA. Able to metabolize other RAs such as 9-cis, 13-cis and 9,13-di-cis RA. Can oxidize all-trans-13,14-dihydroretinoate (DRA) to metabolites which could include all-trans-4-oxo-DRA, all-trans-4-hydroxy-DRA, all-trans-5,8-epoxy-DRA, and all-trans-18-hydroxy-DRA. May play a role in the oxidative metabolism of xenobiotics such as tazarotenic acid. The chain is Cytochrome P450 26A1 from Homo sapiens (Human).